The sequence spans 662 residues: Protein Aster-C (662 aa).

Residues 1-34 (MEGAPTVRQVMNEGDSSLATDLQEDVEENPSPTV) are disordered. Positions 69–136 (EEYRRQFTHL…KNITFMTKEK (68 aa)) constitute a GRAM domain. Disordered stretches follow at residues 212–237 (SIED…EKLS) and 249–284 (RVSE…LPTL). Residues 265–276 (LGKEESQNEKQT) show a composition bias toward basic and acidic residues. The 172-residue stretch at 326 to 497 (HGRLFINRIF…DLLIEESVLN (172 aa)) folds into the VASt domain. A helical transmembrane segment spans residues 557–577 (LIVVMSIFVLLLVLLNVTLFL).

It is found in the endoplasmic reticulum membrane. The protein resides in the cell membrane. In terms of biological role, cholesterol transporter that mediates non-vesicular transport of cholesterol from the plasma membrane (PM) to the endoplasmic reticulum (ER). Contains unique domains for binding cholesterol and the PM, thereby serving as a molecular bridge for the transfer of cholesterol from the PM to the ER. Plays a crucial role in cholesterol homeostasis and has the unique ability to localize to the PM based on the level of membrane cholesterol. In lipid-poor conditions localizes to the ER membrane and in response to excess cholesterol in the PM is recruited to the endoplasmic reticulum-plasma membrane contact sites (EPCS) which is mediated by the GRAM domain. At the EPCS, the sterol-binding VASt/ASTER domain binds to the cholesterol in the PM and facilitates its transfer from the PM to ER. The chain is Protein Aster-C (GRAMD1C) from Homo sapiens (Human).